The sequence spans 256 residues: Trypsin alpha (256 aa).

An N-terminal signal peptide occupies residues 1 to 22 (MLKIVILLSAVVCALGGTVPEG). Residues 23 to 30 (LLPQLDGR) constitute a propeptide, activation peptide. One can recognise a Peptidase S1 domain in the interval 31–254 (IVGGSATTIS…LRSWVVSTAN (224 aa)). Cys-56 and Cys-72 are oxidised to a cystine. Active-site charge relay system residues include His-71 and Asp-116. Intrachain disulfides connect Cys-180–Cys-197 and Cys-206–Cys-230. The active-site Charge relay system is Ser-210.

It belongs to the peptidase S1 family. Synthesized in the midgut of both larvae and adults, primarily in the ventriculus and gastric caeca.

It localises to the secreted. The protein resides in the extracellular space. The catalysed reaction is Preferential cleavage: Arg-|-Xaa, Lys-|-Xaa.. The polypeptide is Trypsin alpha (alphaTry) (Drosophila melanogaster (Fruit fly)).